Consider the following 607-residue polypeptide: 2-isopropylmalate synthase (607 aa).

Residues 1-10 show a composition bias toward polar residues; the sequence is MASFSESLSQ. A disordered region spans residues 1-40; the sequence is MASFSESLSQDPADAYKSAPSITKPMGPPSPGQPQWNPQR. In terms of domain architecture, Pyruvate carboxyltransferase spans 75–349; it reads PLWCAVDLRD…DPQIDFSNID (275 aa). Mg(2+) contacts are provided by aspartate 84, histidine 288, histidine 290, and asparagine 324. The tract at residues 491–607 is regulatory domain; that stretch reads PVQPLERIKQ…VSAVNRAMPR (117 aa).

Belongs to the alpha-IPM synthase/homocitrate synthase family. LeuA type 2 subfamily. In terms of assembly, homodimer. Requires Mg(2+) as cofactor.

It is found in the cytoplasm. The enzyme catalyses 3-methyl-2-oxobutanoate + acetyl-CoA + H2O = (2S)-2-isopropylmalate + CoA + H(+). The protein operates within amino-acid biosynthesis; L-leucine biosynthesis; L-leucine from 3-methyl-2-oxobutanoate: step 1/4. Catalyzes the condensation of the acetyl group of acetyl-CoA with 3-methyl-2-oxobutanoate (2-ketoisovalerate) to form 3-carboxy-3-hydroxy-4-methylpentanoate (2-isopropylmalate). This Mycobacterium leprae (strain TN) protein is 2-isopropylmalate synthase.